Consider the following 124-residue polypeptide: Large ribosomal subunit protein bL12 (124 aa).

Belongs to the bacterial ribosomal protein bL12 family. Homodimer. Part of the ribosomal stalk of the 50S ribosomal subunit. Forms a multimeric L10(L12)X complex, where L10 forms an elongated spine to which 2 to 4 L12 dimers bind in a sequential fashion. Binds GTP-bound translation factors.

Forms part of the ribosomal stalk which helps the ribosome interact with GTP-bound translation factors. Is thus essential for accurate translation. The protein is Large ribosomal subunit protein bL12 of Vesicomyosocius okutanii subsp. Calyptogena okutanii (strain HA).